The sequence spans 288 residues: MAAKIIDGKTIAQQVRSEVAQKVQARIAAGLRAPGLAVVLVGSNPASQIYVASKRKACEEVGFVSRSYDLPETTSEAELLELIDALNADNTIDGILVQLPLPAGIDNVKVLERIHPDKDVDGFHPYNVGRLCQRAPRLRPCTPRGIVTLLERYNIDTFGLNAVVIGASNIVGRPMSMELLLAGCTTTVTHRFTKNLRHHVENADLLIVAVGKPGFIPGDWIKEGAIVIDVGINRLENGKVVGDVVFEDAAKHASYITPVPGGVGPMTVATLIENTLQACVEYHDPQDE.

NADP(+)-binding positions include 166–168 and I232; that span reads GAS.

Belongs to the tetrahydrofolate dehydrogenase/cyclohydrolase family. In terms of assembly, homodimer.

The enzyme catalyses (6R)-5,10-methylene-5,6,7,8-tetrahydrofolate + NADP(+) = (6R)-5,10-methenyltetrahydrofolate + NADPH. The catalysed reaction is (6R)-5,10-methenyltetrahydrofolate + H2O = (6R)-10-formyltetrahydrofolate + H(+). Its pathway is one-carbon metabolism; tetrahydrofolate interconversion. Catalyzes the oxidation of 5,10-methylenetetrahydrofolate to 5,10-methenyltetrahydrofolate and then the hydrolysis of 5,10-methenyltetrahydrofolate to 10-formyltetrahydrofolate. This chain is Bifunctional protein FolD, found in Shigella dysenteriae serotype 1 (strain Sd197).